We begin with the raw amino-acid sequence, 89 residues long: Elongation factor 1-beta (89 aa).

This sequence belongs to the EF-1-beta/EF-1-delta family.

In terms of biological role, promotes the exchange of GDP for GTP in EF-1-alpha/GDP, thus allowing the regeneration of EF-1-alpha/GTP that could then be used to form the ternary complex EF-1-alpha/GTP/AAtRNA. The polypeptide is Elongation factor 1-beta (Methanococcoides burtonii (strain DSM 6242 / NBRC 107633 / OCM 468 / ACE-M)).